Consider the following 490-residue polypeptide: MKTILVITDGIGYSDKTQYNAFYHAKKPTYDYLFKNVPYGMIDTFGLSVGLPQGQMGNSEVGHMCIGSGRVLYQDLVRISRAIEYDEIKDNPALVEVTQQSAVVHLCGLLSDGGVHSHIVHLKALAQILSTQGKRVYLHLITDGRDVLPKSALNYLADIESICEDNVSIASVSGRFYAMDRDKRWDRVQKAYESIALGKNPTNLSPKEYIQSQYDEGIFDEFLTPVSFGGFQGMNDDESFVFVNFRSDRAREIVDCLGNPQFKEFKRERYVKLHIATMTEYDATFPYPILFPKQNVQNTLAEVISSHRLKQFHTAETEKYAHVTFFLNGGREEAFIGEERVLIPSPNVKTYDLQPQMNASAVGDAVIKAVEQGYDFVVVNFANGDMVGHTGNLEAAIKAVEAVDKELGRIVESAQKHHYALFITSDHGNCEEMKDEKGNMLTNHTVGQVWCFGMIEGVSKIENGGLNNIAPSVLKAMNLPIPPEMDKPLF.

Mn(2+) contacts are provided by Asp9 and Ser59. The Phosphoserine intermediate role is filled by Ser59. Substrate-binding positions include His116, 145 to 146 (RD), Arg175, Arg181, 246 to 249 (RSDR), and Lys319. Mn(2+) contacts are provided by Asp385, His389, Asp426, His427, and His444.

This sequence belongs to the BPG-independent phosphoglycerate mutase family. In terms of assembly, monomer. Mn(2+) serves as cofactor.

The catalysed reaction is (2R)-2-phosphoglycerate = (2R)-3-phosphoglycerate. It participates in carbohydrate degradation; glycolysis; pyruvate from D-glyceraldehyde 3-phosphate: step 3/5. In terms of biological role, catalyzes the interconversion of 2-phosphoglycerate and 3-phosphoglycerate. The chain is 2,3-bisphosphoglycerate-independent phosphoglycerate mutase from Helicobacter hepaticus (strain ATCC 51449 / 3B1).